Here is a 122-residue protein sequence, read N- to C-terminus: Large ribosomal subunit protein uL14 (122 aa).

This sequence belongs to the universal ribosomal protein uL14 family. In terms of assembly, part of the 50S ribosomal subunit. Forms a cluster with proteins L3 and L19. In the 70S ribosome, L14 and L19 interact and together make contacts with the 16S rRNA in bridges B5 and B8.

Functionally, binds to 23S rRNA. Forms part of two intersubunit bridges in the 70S ribosome. In Thiobacillus denitrificans (strain ATCC 25259 / T1), this protein is Large ribosomal subunit protein uL14.